The chain runs to 367 residues: Phosphoribosylaminoimidazole-succinocarboxamide synthase (367 aa).

The protein belongs to the SAICAR synthetase family.

The enzyme catalyses 5-amino-1-(5-phospho-D-ribosyl)imidazole-4-carboxylate + L-aspartate + ATP = (2S)-2-[5-amino-1-(5-phospho-beta-D-ribosyl)imidazole-4-carboxamido]succinate + ADP + phosphate + 2 H(+). It participates in purine metabolism; IMP biosynthesis via de novo pathway; 5-amino-1-(5-phospho-D-ribosyl)imidazole-4-carboxamide from 5-amino-1-(5-phospho-D-ribosyl)imidazole-4-carboxylate: step 1/2. This chain is Phosphoribosylaminoimidazole-succinocarboxamide synthase, found in Shewanella baltica (strain OS195).